A 100-amino-acid polypeptide reads, in one-letter code: Large ribosomal subunit protein bL27 (100 aa).

Residues 1 to 9 constitute a propeptide that is removed on maturation; that stretch reads MLVMNLQLF.

It belongs to the bacterial ribosomal protein bL27 family. The N-terminus is cleaved by ribosomal processing cysteine protease Prp.

This Clostridium botulinum (strain Hall / ATCC 3502 / NCTC 13319 / Type A) protein is Large ribosomal subunit protein bL27.